Reading from the N-terminus, the 157-residue chain is uncharacterized protein (157 aa).

Belongs to the MG067/MG068/MG395 family.

This is an uncharacterized protein from Mycoplasma pneumoniae (strain ATCC 29342 / M129 / Subtype 1) (Mycoplasmoides pneumoniae).